Here is a 244-residue protein sequence, read N- to C-terminus: Probable transcriptional regulatory protein XfasM23_0940 (244 aa).

This sequence belongs to the TACO1 family.

It is found in the cytoplasm. The chain is Probable transcriptional regulatory protein XfasM23_0940 from Xylella fastidiosa (strain M23).